The chain runs to 235 residues: Ribosomal RNA large subunit methyltransferase E (235 aa).

5 residues coordinate S-adenosyl-L-methionine: Gly-76, Trp-78, Asp-99, Asp-115, and Asp-139. The active-site Proton acceptor is Lys-179.

Belongs to the class I-like SAM-binding methyltransferase superfamily. RNA methyltransferase RlmE family.

The protein localises to the cytoplasm. The enzyme catalyses uridine(2552) in 23S rRNA + S-adenosyl-L-methionine = 2'-O-methyluridine(2552) in 23S rRNA + S-adenosyl-L-homocysteine + H(+). Specifically methylates the uridine in position 2552 of 23S rRNA at the 2'-O position of the ribose in the fully assembled 50S ribosomal subunit. The chain is Ribosomal RNA large subunit methyltransferase E from Rhodopseudomonas palustris (strain BisB5).